Here is a 365-residue protein sequence, read N- to C-terminus: Probable protein kinase At2g41970 (365 aa).

Residues 1–50 form a disordered region; the sequence is MFCCGGADEEPAGPPANQYAAPPNKAGNPNFGGGNRGEPRNPNAPRSGAP. The region spanning 73–354 is the Protein kinase domain; the sequence is FGNKALIGEG…IVVKALQPLL (282 aa). ATP-binding positions include 79–87 and Lys-100; that span reads IGEGSYGRV. Tyr-146 carries the phosphotyrosine modification. Asp-204 (proton acceptor) is an active-site residue. Ser-208 and Ser-238 each carry phosphoserine. Phosphothreonine occurs at positions 239 and 244. Tyr-252 bears the Phosphotyrosine mark.

The protein belongs to the protein kinase superfamily. Tyr protein kinase family.

This chain is Probable protein kinase At2g41970, found in Arabidopsis thaliana (Mouse-ear cress).